The chain runs to 381 residues: Chymosin (381 aa).

The signal sequence occupies residues 1 to 16; sequence MRCLVVLLAVFALSQG. A propeptide spans 17 to 58 (activation peptide); it reads AEITRIPLYKGKSLRKALKEHGLLEDFLQKQQYGISSKYSGF. One can recognise a Peptidase A1 domain in the interval 74-378; that stretch reads YFGKIYLGTP…DRANNLVGLA (305 aa). Asp92 is a catalytic residue. 2 disulfides stabilise this stretch: Cys105-Cys110 and Cys265-Cys269. Asp274 is an active-site residue. An intrachain disulfide couples Cys308 to Cys341.

The protein belongs to the peptidase A1 family. In terms of assembly, monomer.

The catalysed reaction is Broad specificity similar to that of pepsin A. Clots milk by cleavage of a single 104-Ser-Phe-|-Met-Ala-107 bond in kappa-chain of casein.. Chymosin is synthesized in the mucosa of the abomasum (fourth stomach) of young (unweaned) ruminants. The enzyme hydrolyzes casein to paracasein. This chain is Chymosin (CYM), found in Bos taurus (Bovine).